Reading from the N-terminus, the 259-residue chain is Deoxyribose-phosphate aldolase (259 aa).

D102 acts as the Proton donor/acceptor in catalysis. The active-site Schiff-base intermediate with acetaldehyde is K167. Residue K201 is the Proton donor/acceptor of the active site.

It belongs to the DeoC/FbaB aldolase family. DeoC type 2 subfamily.

The protein resides in the cytoplasm. The enzyme catalyses 2-deoxy-D-ribose 5-phosphate = D-glyceraldehyde 3-phosphate + acetaldehyde. The protein operates within carbohydrate degradation; 2-deoxy-D-ribose 1-phosphate degradation; D-glyceraldehyde 3-phosphate and acetaldehyde from 2-deoxy-alpha-D-ribose 1-phosphate: step 2/2. Functionally, catalyzes a reversible aldol reaction between acetaldehyde and D-glyceraldehyde 3-phosphate to generate 2-deoxy-D-ribose 5-phosphate. The chain is Deoxyribose-phosphate aldolase from Shigella flexneri.